The primary structure comprises 90 residues: Probable Fe(2+)-trafficking protein (90 aa).

It belongs to the Fe(2+)-trafficking protein family.

Its function is as follows. Could be a mediator in iron transactions between iron acquisition and iron-requiring processes, such as synthesis and/or repair of Fe-S clusters in biosynthetic enzymes. The polypeptide is Probable Fe(2+)-trafficking protein (Acinetobacter baylyi (strain ATCC 33305 / BD413 / ADP1)).